The chain runs to 344 residues: Ribosomal RNA small subunit methyltransferase H 2 (344 aa).

S-adenosyl-L-methionine contacts are provided by residues 78–80 (GGH), Asp98, Phe131, Asp145, and Gln152.

This sequence belongs to the methyltransferase superfamily. RsmH family.

The protein localises to the cytoplasm. It catalyses the reaction cytidine(1402) in 16S rRNA + S-adenosyl-L-methionine = N(4)-methylcytidine(1402) in 16S rRNA + S-adenosyl-L-homocysteine + H(+). Specifically methylates the N4 position of cytidine in position 1402 (C1402) of 16S rRNA. The sequence is that of Ribosomal RNA small subunit methyltransferase H 2 from Acholeplasma laidlawii (strain PG-8A).